We begin with the raw amino-acid sequence, 359 residues long: MQAATVVINRRALRHNLQRLRELAPASKMVAVVKANAYGHGLLETARTLPDADAFGVARLEEALRLRAGGITKPVLLLEGFFDARDLPTISAQHFHTAVHNEEQLAALEEASLDEPVTVWMKLDTGMHRLGVRPEQAGAFYHRLTQCKNVRQPVNIVSHFARADEPKCGATEKQLAIFNTFCEGKPGQRSIAASGGILLWPQSHFDWVRPGIILYGVSPLEDRSTGADFGCQPVMSLTSSLIAVREHKAGEPVGYGGTWVSERDTRLGVVAMGYGDGYPRAAPSGTPVLVNGREVPIVGRVAMDMICVDLGPQAQDKAGDPVILWGEGLPVERIAEMTKVSAYELITRLTSRVAMKYVD.

K34 functions as the Proton acceptor; specific for D-alanine in the catalytic mechanism. Residue K34 is modified to N6-(pyridoxal phosphate)lysine. R129 contributes to the substrate binding site. Y255 serves as the catalytic Proton acceptor; specific for L-alanine. A substrate-binding site is contributed by M303.

It belongs to the alanine racemase family. In terms of assembly, monomer but homodimer in the presence of the substrate. Pyridoxal 5'-phosphate serves as cofactor.

The catalysed reaction is L-alanine = D-alanine. It participates in amino-acid biosynthesis; D-alanine biosynthesis; D-alanine from L-alanine: step 1/1. It functions in the pathway cell wall biogenesis; peptidoglycan biosynthesis. Its function is as follows. Catalyzes the interconversion of L-alanine and D-alanine. In Shigella dysenteriae, this protein is Alanine racemase, biosynthetic (alr).